A 417-amino-acid polypeptide reads, in one-letter code: Carboxypeptidase A2 (417 aa).

Positions 1–16 (MRLTLLLAALLGYIYC) are cleaved as a signal peptide. A propeptide spans 17–112 (QETFVGDQVL…EMLFNQQRER (96 aa)) (activation peptide). A Peptidase M14 domain is found at 120 to 412 (AYHTLEEIYQ…LGLKTIMEHV (293 aa)). Zn(2+) is bound by residues histidine 177 and glutamate 180. Substrate-binding positions include 177–180 (HARE), arginine 235, and 252–253 (NR). An intrachain disulfide couples cysteine 246 to cysteine 269. Residue histidine 304 coordinates Zn(2+). 305-306 (SY) provides a ligand contact to substrate. The cysteines at positions 318 and 352 are disulfide-linked. Substrate is bound at residue tyrosine 356. The active-site Proton donor/acceptor is the glutamate 378.

Belongs to the peptidase M14 family. Zn(2+) is required as a cofactor.

Its subcellular location is the secreted. It catalyses the reaction Similar to that of carboxypeptidase A (EC 3.4.17.1), but with a preference for bulkier C-terminal residues.. Its function is as follows. Carboxypeptidase that catalyzes the release of a C-terminal amino acid, with a preference for large aromatic C-terminal residues. This chain is Carboxypeptidase A2 (Cpa2), found in Rattus norvegicus (Rat).